A 109-amino-acid chain; its full sequence is Ferredoxin (109 aa).

2 4Fe-4S ferredoxin-type domains span residues 2–30 (TYVV…YEGE) and 31–60 (FMLV…PESP). Residues cysteine 9 and cysteine 17 each coordinate [3Fe-4S] cluster. [4Fe-4S] cluster-binding residues include cysteine 21, cysteine 40, cysteine 43, and cysteine 46. Cysteine 50 contributes to the [3Fe-4S] cluster binding site.

[4Fe-4S] cluster is required as a cofactor. It depends on [3Fe-4S] cluster as a cofactor.

Ferredoxins are iron-sulfur proteins that transfer electrons in a wide variety of metabolic reactions. This Rickettsia felis (strain ATCC VR-1525 / URRWXCal2) (Rickettsia azadi) protein is Ferredoxin (fdxA).